A 245-amino-acid chain; its full sequence is 1-(5-phosphoribosyl)-5-[(5-phosphoribosylamino)methylideneamino] imidazole-4-carboxamide isomerase (245 aa).

The Proton acceptor role is filled by aspartate 7. Aspartate 129 functions as the Proton donor in the catalytic mechanism.

The protein belongs to the HisA/HisF family.

Its subcellular location is the cytoplasm. It catalyses the reaction 1-(5-phospho-beta-D-ribosyl)-5-[(5-phospho-beta-D-ribosylamino)methylideneamino]imidazole-4-carboxamide = 5-[(5-phospho-1-deoxy-D-ribulos-1-ylimino)methylamino]-1-(5-phospho-beta-D-ribosyl)imidazole-4-carboxamide. It participates in amino-acid biosynthesis; L-histidine biosynthesis; L-histidine from 5-phospho-alpha-D-ribose 1-diphosphate: step 4/9. This is 1-(5-phosphoribosyl)-5-[(5-phosphoribosylamino)methylideneamino] imidazole-4-carboxamide isomerase from Escherichia coli O17:K52:H18 (strain UMN026 / ExPEC).